Consider the following 91-residue polypeptide: MRLLKPLVALPTYCLVLFIRGYQKWISPLLGPHCRFNPTCSSYAIQAINLHGSVKGSWLAVKRILKCHPLHSGGNDPVPEKLTHINHQHEK.

The disordered stretch occupies residues 72–91 (SGGNDPVPEKLTHINHQHEK). Positions 78 to 91 (VPEKLTHINHQHEK) are enriched in basic and acidic residues.

This sequence belongs to the UPF0161 family.

Its subcellular location is the cell inner membrane. Could be involved in insertion of integral membrane proteins into the membrane. In Pseudoalteromonas translucida (strain TAC 125), this protein is Putative membrane protein insertion efficiency factor.